A 339-amino-acid chain; its full sequence is Nitrilase 2 (339 aa).

S2 bears the N-acetylserine mark. The CN hydrolase domain maps to 18-290; the sequence is VRATIVQAST…EGLITADLDL (273 aa). The active-site Proton acceptor is the E58. K145 serves as the catalytic Proton donor. C179 functions as the Nucleophile in the catalytic mechanism.

The protein belongs to the carbon-nitrogen hydrolase superfamily. Nitrilase family.

Its subcellular location is the cell membrane. It carries out the reaction a nitrile + 2 H2O = a carboxylate + NH4(+). Its function is as follows. Can convert indole-3-acetonitrile to the plant hormone indole-3-acetic acid. This is Nitrilase 2 (NIT2) from Arabidopsis thaliana (Mouse-ear cress).